A 491-amino-acid chain; its full sequence is Glutamyl-tRNA(Gln) amidotransferase subunit A (491 aa).

Serine 158 functions as the Charge relay system in the catalytic mechanism. Serine 182 functions as the Acyl-ester intermediate in the catalytic mechanism.

Belongs to the amidase family. GatA subfamily. In terms of assembly, heterotrimer of A, B and C subunits.

It catalyses the reaction L-glutamyl-tRNA(Gln) + L-glutamine + ATP + H2O = L-glutaminyl-tRNA(Gln) + L-glutamate + ADP + phosphate + H(+). Functionally, allows the formation of correctly charged Gln-tRNA(Gln) through the transamidation of misacylated Glu-tRNA(Gln) in organisms which lack glutaminyl-tRNA synthetase. The reaction takes place in the presence of glutamine and ATP through an activated gamma-phospho-Glu-tRNA(Gln). This is Glutamyl-tRNA(Gln) amidotransferase subunit A from Bradyrhizobium diazoefficiens (strain JCM 10833 / BCRC 13528 / IAM 13628 / NBRC 14792 / USDA 110).